We begin with the raw amino-acid sequence, 95 residues long: Aspartyl/glutamyl-tRNA(Asn/Gln) amidotransferase subunit C (95 aa).

Belongs to the GatC family. As to quaternary structure, heterotrimer of A, B and C subunits.

The enzyme catalyses L-glutamyl-tRNA(Gln) + L-glutamine + ATP + H2O = L-glutaminyl-tRNA(Gln) + L-glutamate + ADP + phosphate + H(+). It catalyses the reaction L-aspartyl-tRNA(Asn) + L-glutamine + ATP + H2O = L-asparaginyl-tRNA(Asn) + L-glutamate + ADP + phosphate + 2 H(+). Functionally, allows the formation of correctly charged Asn-tRNA(Asn) or Gln-tRNA(Gln) through the transamidation of misacylated Asp-tRNA(Asn) or Glu-tRNA(Gln) in organisms which lack either or both of asparaginyl-tRNA or glutaminyl-tRNA synthetases. The reaction takes place in the presence of glutamine and ATP through an activated phospho-Asp-tRNA(Asn) or phospho-Glu-tRNA(Gln). The chain is Aspartyl/glutamyl-tRNA(Asn/Gln) amidotransferase subunit C from Pseudomonas fluorescens (strain ATCC BAA-477 / NRRL B-23932 / Pf-5).